The primary structure comprises 1375 residues: DNA-directed RNA polymerase subunit beta (1375 aa).

It belongs to the RNA polymerase beta chain family. As to quaternary structure, the RNAP catalytic core consists of 2 alpha, 1 beta, 1 beta' and 1 omega subunit. When a sigma factor is associated with the core the holoenzyme is formed, which can initiate transcription.

The catalysed reaction is RNA(n) + a ribonucleoside 5'-triphosphate = RNA(n+1) + diphosphate. DNA-dependent RNA polymerase catalyzes the transcription of DNA into RNA using the four ribonucleoside triphosphates as substrates. This is DNA-directed RNA polymerase subunit beta from Malacoplasma penetrans (strain HF-2) (Mycoplasma penetrans).